Here is a 311-residue protein sequence, read N- to C-terminus: Lipoyl synthase (311 aa).

Positions 36, 41, 47, 66, 70, 73, and 280 each coordinate [4Fe-4S] cluster. Positions 51–269 constitute a Radical SAM core domain; the sequence is RDGPGTATFM…RVAESEFGFL (219 aa).

This sequence belongs to the radical SAM superfamily. Lipoyl synthase family. [4Fe-4S] cluster serves as cofactor.

The protein localises to the cytoplasm. The enzyme catalyses [[Fe-S] cluster scaffold protein carrying a second [4Fe-4S](2+) cluster] + N(6)-octanoyl-L-lysyl-[protein] + 2 oxidized [2Fe-2S]-[ferredoxin] + 2 S-adenosyl-L-methionine + 4 H(+) = [[Fe-S] cluster scaffold protein] + N(6)-[(R)-dihydrolipoyl]-L-lysyl-[protein] + 4 Fe(3+) + 2 hydrogen sulfide + 2 5'-deoxyadenosine + 2 L-methionine + 2 reduced [2Fe-2S]-[ferredoxin]. It participates in protein modification; protein lipoylation via endogenous pathway; protein N(6)-(lipoyl)lysine from octanoyl-[acyl-carrier-protein]: step 2/2. Functionally, catalyzes the radical-mediated insertion of two sulfur atoms into the C-6 and C-8 positions of the octanoyl moiety bound to the lipoyl domains of lipoate-dependent enzymes, thereby converting the octanoylated domains into lipoylated derivatives. This Halobacterium salinarum (strain ATCC 29341 / DSM 671 / R1) protein is Lipoyl synthase.